The sequence spans 139 residues: Large ribosomal subunit protein uL16 (139 aa).

A compositionally biased stretch (basic residues) spans 1 to 16 (MLIPKRTKYRKQHRPV). Residues 1 to 22 (MLIPKRTKYRKQHRPVRSGMSK) form a disordered region.

The protein belongs to the universal ribosomal protein uL16 family. Part of the 50S ribosomal subunit.

Its function is as follows. Binds 23S rRNA and is also seen to make contacts with the A and possibly P site tRNAs. The sequence is that of Large ribosomal subunit protein uL16 from Bifidobacterium longum subsp. infantis (strain ATCC 15697 / DSM 20088 / JCM 1222 / NCTC 11817 / S12).